We begin with the raw amino-acid sequence, 894 residues long: Protein translocase subunit SecA (894 aa).

ATP is bound by residues Gln-87, 105-109 (GEGKT), and Asp-512. A disordered region spans residues 836–870 (EVEQAERERQAHAEQESSHYHAEGEGQDFSDLHIG). Zn(2+)-binding residues include Cys-875, Cys-877, Cys-886, and His-887.

It belongs to the SecA family. Monomer and homodimer. Part of the essential Sec protein translocation apparatus which comprises SecA, SecYEG and auxiliary proteins SecDF-YajC and YidC. Zn(2+) serves as cofactor.

Its subcellular location is the cell inner membrane. The protein resides in the cytoplasm. The enzyme catalyses ATP + H2O + cellular proteinSide 1 = ADP + phosphate + cellular proteinSide 2.. In terms of biological role, part of the Sec protein translocase complex. Interacts with the SecYEG preprotein conducting channel. Has a central role in coupling the hydrolysis of ATP to the transfer of proteins into and across the cell membrane, serving both as a receptor for the preprotein-SecB complex and as an ATP-driven molecular motor driving the stepwise translocation of polypeptide chains across the membrane. The protein is Protein translocase subunit SecA of Glaesserella parasuis serovar 5 (strain SH0165) (Haemophilus parasuis).